Reading from the N-terminus, the 905-residue chain is Translation initiation factor IF-2 (905 aa).

Basic and acidic residues predominate over residues 50–62 (HYEAKGGEDKAAE). The tract at residues 50-306 (HYEAKGGEDK…QKHEVGGVRL (257 aa)) is disordered. A compositionally biased stretch (low complexity) spans 63-75 (KNAPAATPASASK). Positions 89 to 125 (GPKPSAAPKPGAAPKPGGAPKPGGAPKPGATPKPGGA) are enriched in pro residues. A compositionally biased stretch (low complexity) spans 161 to 171 (PFSTGSSSDRP). The span at 233 to 276 (GSGGGGRGRGGRGGGPGHGGPGHGGFRGRGGRRGGTAGAFGRPG) shows a compositional bias: gly residues. Over residues 280–290 (RRGKKSKRQKR) the composition is skewed to basic residues. The span at 291-302 (HEFEEQQKHEVG) shows a compositional bias: basic and acidic residues. Residues 401 to 575 (KRPPVVTVMG…LTADAALELT (175 aa)) form the tr-type G domain. Residues 410–417 (GHVDHGKT) form a G1 region. A GTP-binding site is contributed by 410–417 (GHVDHGKT). A G2 region spans residues 435-439 (GITQG). The G3 stretch occupies residues 460-463 (DTPG). GTP is bound by residues 460–464 (DTPGH) and 514–517 (NKID). The G4 stretch occupies residues 514–517 (NKID). Positions 550 to 552 (SAK) are G5.

It belongs to the TRAFAC class translation factor GTPase superfamily. Classic translation factor GTPase family. IF-2 subfamily.

It localises to the cytoplasm. Functionally, one of the essential components for the initiation of protein synthesis. Protects formylmethionyl-tRNA from spontaneous hydrolysis and promotes its binding to the 30S ribosomal subunits. Also involved in the hydrolysis of GTP during the formation of the 70S ribosomal complex. The chain is Translation initiation factor IF-2 from Corynebacterium aurimucosum (strain ATCC 700975 / DSM 44827 / CIP 107346 / CN-1) (Corynebacterium nigricans).